The chain runs to 300 residues: Homoserine kinase (300 aa).

87–97 lines the ATP pocket; the sequence is PISRGLGSSSA.

It belongs to the GHMP kinase family. Homoserine kinase subfamily.

It is found in the cytoplasm. The catalysed reaction is L-homoserine + ATP = O-phospho-L-homoserine + ADP + H(+). It participates in amino-acid biosynthesis; L-threonine biosynthesis; L-threonine from L-aspartate: step 4/5. Functionally, catalyzes the ATP-dependent phosphorylation of L-homoserine to L-homoserine phosphate. In Clostridium kluyveri (strain ATCC 8527 / DSM 555 / NBRC 12016 / NCIMB 10680 / K1), this protein is Homoserine kinase.